We begin with the raw amino-acid sequence, 372 residues long: Cyclin-dependent kinase 9 (372 aa).

One can recognise a Protein kinase domain in the interval 19–315 (YEKLAKIGQG…SDDALNHDFF (297 aa)). 25–33 (IGQGTFGEV) lines the ATP pocket. At Lys44 the chain carries N6-acetyllysine; by EP300/CBP, PCAF/KAT2B and GCN5/KAT2A. Residues Lys48 and 104–106 (DFC) each bind ATP. At Lys48 the chain carries N6-acetyllysine; by PCAF/KAT2B and GCN5/KAT2A. Asp149 acts as the Proton acceptor in catalysis. Positions 166–191 (ADFGLARAFSLAKNSQPNRYTNRVVT) are T-loop. Asp167 is an ATP binding site. Ser175 carries the post-translational modification Phosphoserine. Thr186 carries the post-translational modification Phosphothreonine; by CaMK1D. Residues 343–372 (RRKGSQITQQSTNQSRNPATTNQTEFERVF) are disordered. Residue Ser347 is modified to Phosphoserine; by CDK9 and PKA. Polar residues predominate over residues 347–366 (SQITQQSTNQSRNPATTNQT). Phosphothreonine; by CDK9 is present on Thr350. Phosphoserine; by CDK9 is present on Ser353. The residue at position 354 (Thr354) is a Phosphothreonine; by CDK9. The residue at position 357 (Ser357) is a Phosphoserine; by CDK9. A phosphothreonine; by CDK9 mark is found at Thr362 and Thr363.

The protein belongs to the protein kinase superfamily. CMGC Ser/Thr protein kinase family. CDC2/CDKX subfamily. Component of the super elongation complex (SEC), at least composed of EAF1, EAF2, CDK9, MLLT3/AF9, AFF (AFF1 or AFF4), the P-TEFb complex and ELL (ELL, ELL2 or ELL3). Associates with CCNT1/cyclin-T1, CCNT2/cyclin-T2 (isoform A and isoform B) or CCNK/cyclin-K to form active P-TEFb. P-TEFb forms a complex with AFF4/AF5Q31 and is part of the super elongation complex (SEC). Component of a complex which is composed of at least 5 members: HTATSF1/Tat-SF1, P-TEFb complex, RNA pol II, SUPT5H, and NCL/nucleolin. Associates with UBR5 and forms a transcription regulatory complex composed of CDK9, RNAP II, UBR5 and TFIIS/TCEA1 that can stimulate target gene transcription (e.g. gamma fibrinogen/FGG) by recruiting their promoters. Component of the 7SK snRNP inactive complex which is composed of at least 8 members: P-TEFb (composed of CDK9 and CCNT1/cyclin-T1), HEXIM1, HEXIM2, LARP7, BCDIN3, SART3 proteins and 7SK and U6 snRNAs. This inactive 7SK snRNP complex can also interact with NCOR1 and HDAC3, probably to regulate CDK9 acetylation. Release of P-TEFb from P-TEFb/7SK snRNP complex requires both PP2B to transduce calcium Ca(2+) signaling in response to stimuli (e.g. UV or hexamethylene bisacetamide (HMBA)), and PPP1CA to dephosphorylate Thr-186. This released P-TEFb remains inactive in the pre-initiation complex with BRD4 until new Thr-186 phosphorylation occurs after the synthesis of a short RNA. Interacts with BRD4; to target chromatin binding. Interacts with JMJD6. Interacts with activated nuclear STAT3 and RELA/p65. Binds to AR and MYOD1. Forms a complex composed of CDK9, CCNT1/cyclin-T1, EP300 and GATA4 that stimulates hypertrophy in cardiomyocytes. The large PER complex involved in the repression of transcriptional termination is composed of at least PER2, CDK9, DDX5, DHX9, NCBP1 and POLR2A. Interacts with HSF1. Interacts with TBX21. Interacts with WDR43. Interacts with ZMYND8; the association appears to occur between homodimeric ZMYND8 and the activated form of the P-TEFb complex. Autophosphorylation at Thr-186, Ser-347, Thr-350, Ser-353, Thr-354 and Ser-357 triggers kinase activity by promoting cyclin and substrate binding upon conformational changes. Thr-186 phosphorylation requires the calcium Ca(2+) signaling pathway, including CaMK1D and calmodulin. This inhibition is relieved by Thr-29 dephosphorylation. Phosphorylation at Ser-175 inhibits kinase activity. Can be phosphorylated on either Thr-362 or Thr-363 but not on both simultaneously. Post-translationally, dephosphorylation of Thr-186 by PPM1A and PPM1B blocks CDK9 activity and may lead to CDK9 proteasomal degradation. However, PPP1CA-mediated Thr-186 dephosphorylation is required to release P-TEFb from its inactive P-TEFb/7SK snRNP complex. Dephosphorylated at Ser-347 by the PNUTS-PP1 complex during RNA polymerase II transcription pause-release. Dephosphorylation of C-terminus Thr and Ser residues by protein phosphatase-1 (PP1) triggers CDK9 activity. In terms of processing, N6-acetylation of Lys-44 promotes kinase activity, whereas acetylation of both Lys-44 and Lys-48 mediated by PCAF/KAT2B and GCN5/KAT2A reduces kinase activity. The acetylated form associates with PML bodies in the nuclear matrix and with the transcriptionally silent HIV-1 genome; deacetylated upon transcription stimulation. Deacetylated by SIRT7, promoting the kinase activity and subsequent 'Ser-2' phosphorylation of the C-terminal domain (CTD) of RNA polymerase II. Polyubiquitinated and thus activated by UBR5. This ubiquitination is promoted by TFIIS/TCEA1 and favors 'Ser-2' phosphorylation of RPB1/POLR2A CTD.

The protein resides in the nucleus. It is found in the cytoplasm. Its subcellular location is the PML body. It catalyses the reaction L-seryl-[protein] + ATP = O-phospho-L-seryl-[protein] + ADP + H(+). The enzyme catalyses L-threonyl-[protein] + ATP = O-phospho-L-threonyl-[protein] + ADP + H(+). It carries out the reaction [DNA-directed RNA polymerase] + ATP = phospho-[DNA-directed RNA polymerase] + ADP + H(+). Its activity is regulated as follows. Activation by Thr-186 phosphorylation is calcium Ca(2+) signaling pathway-dependent; actively inactivated by dephosphorylation mediated by PPP1CA, PPM1A and PPM1B. Reversibly repressed by acetylation at Lys-44 and Lys-48. Functionally, protein kinase involved in the regulation of transcription. Member of the cyclin-dependent kinase pair (CDK9/cyclin-T) complex, also called positive transcription elongation factor b (P-TEFb), which facilitates the transition from abortive to productive elongation by phosphorylating the CTD (C-terminal domain) of the large subunit of RNA polymerase II (RNAP II) POLR2A, SUPT5H and RDBP. This complex is inactive when in the 7SK snRNP complex form. Phosphorylates EP300, MYOD1, RPB1/POLR2A and AR and the negative elongation factors DSIF and NELFE. Regulates cytokine inducible transcription networks by facilitating promoter recognition of target transcription factors (e.g. TNF-inducible RELA/p65 activation and IL-6-inducible STAT3 signaling). Promotes RNA synthesis in genetic programs for cell growth, differentiation and viral pathogenesis. P-TEFb is also involved in cotranscriptional histone modification, mRNA processing and mRNA export. Modulates a complex network of chromatin modifications including histone H2B monoubiquitination (H2Bub1), H3 lysine 4 trimethylation (H3K4me3) and H3K36me3; integrates phosphorylation during transcription with chromatin modifications to control co-transcriptional histone mRNA processing. The CDK9/cyclin-K complex has also a kinase activity towards CTD of RNAP II and can substitute for CDK9/cyclin-T P-TEFb in vitro. Replication stress response protein; the CDK9/cyclin-K complex is required for genome integrity maintenance, by promoting cell cycle recovery from replication arrest and limiting single-stranded DNA amount in response to replication stress, thus reducing the breakdown of stalled replication forks and avoiding DNA damage. In addition, probable function in DNA repair of isoform 2 via interaction with KU70/XRCC6. Promotes cardiac myocyte enlargement. RPB1/POLR2A phosphorylation on 'Ser-2' in CTD activates transcription. AR phosphorylation modulates AR transcription factor promoter selectivity and cell growth. DSIF and NELF phosphorylation promotes transcription by inhibiting their negative effect. The phosphorylation of MYOD1 enhances its transcriptional activity and thus promotes muscle differentiation. Catalyzes phosphorylation of KAT5, promoting KAT5 recruitment to chromatin and histone acetyltransferase activity. The chain is Cyclin-dependent kinase 9 (CDK9) from Bos taurus (Bovine).